A 294-amino-acid polypeptide reads, in one-letter code: Acetyl-coenzyme A carboxylase carboxyl transferase subunit beta (294 aa).

The CoA carboxyltransferase N-terminal domain maps to 30–294 (IMTKCPECKK…PGVGGEVDGE (265 aa)). Cys-34, Cys-37, Cys-53, and Cys-56 together coordinate Zn(2+). Residues 34 to 56 (CPECKKIMYTKELQKNLMVCNYC) form a C4-type zinc finger.

The protein belongs to the AccD/PCCB family. In terms of assembly, acetyl-CoA carboxylase is a heterohexamer composed of biotin carboxyl carrier protein (AccB), biotin carboxylase (AccC) and two subunits each of ACCase subunit alpha (AccA) and ACCase subunit beta (AccD). The cofactor is Zn(2+).

The protein localises to the cytoplasm. It catalyses the reaction N(6)-carboxybiotinyl-L-lysyl-[protein] + acetyl-CoA = N(6)-biotinyl-L-lysyl-[protein] + malonyl-CoA. It functions in the pathway lipid metabolism; malonyl-CoA biosynthesis; malonyl-CoA from acetyl-CoA: step 1/1. Its function is as follows. Component of the acetyl coenzyme A carboxylase (ACC) complex. Biotin carboxylase (BC) catalyzes the carboxylation of biotin on its carrier protein (BCCP) and then the CO(2) group is transferred by the transcarboxylase to acetyl-CoA to form malonyl-CoA. The protein is Acetyl-coenzyme A carboxylase carboxyl transferase subunit beta of Listeria monocytogenes serovar 1/2a (strain ATCC BAA-679 / EGD-e).